Consider the following 384-residue polypeptide: Spermidine/putrescine import ATP-binding protein PotA (384 aa).

Residues 6–238 (IAFQNVSKVF…PINHFVATFI (233 aa)) enclose the ABC transporter domain. 40–47 (GASGSGKS) provides a ligand contact to ATP.

Belongs to the ABC transporter superfamily. Spermidine/putrescine importer (TC 3.A.1.11.1) family. In terms of assembly, the complex is composed of two ATP-binding proteins (PotA), two transmembrane proteins (PotB and PotC) and a solute-binding protein (PotD).

The protein resides in the cell membrane. It catalyses the reaction ATP + H2O + polyamine-[polyamine-binding protein]Side 1 = ADP + phosphate + polyamineSide 2 + [polyamine-binding protein]Side 1.. Its function is as follows. Part of the ABC transporter complex PotABCD involved in spermidine/putrescine import. Responsible for energy coupling to the transport system. In Streptococcus thermophilus (strain ATCC BAA-250 / LMG 18311), this protein is Spermidine/putrescine import ATP-binding protein PotA.